Consider the following 438-residue polypeptide: Serine hydroxymethyltransferase (438 aa).

Residue 133 to 135 participates in (6S)-5,6,7,8-tetrahydrofolate binding; it reads GHI. Lys239 carries the N6-(pyridoxal phosphate)lysine modification.

The protein belongs to the SHMT family. Homodimer. It depends on pyridoxal 5'-phosphate as a cofactor.

It localises to the cytoplasm. The enzyme catalyses 5,10-methylenetetrahydromethanopterin + glycine + H2O = 5,6,7,8-tetrahydromethanopterin + L-serine. It functions in the pathway amino-acid biosynthesis; glycine biosynthesis; glycine from L-serine: step 1/1. Its function is as follows. Catalyzes the reversible interconversion of serine and glycine with tetrahydromethanopterin (H4MPT) serving as the one-carbon carrier. Also exhibits a pteridine-independent aldolase activity toward beta-hydroxyamino acids, producing glycine and aldehydes, via a retro-aldol mechanism. The protein is Serine hydroxymethyltransferase of Archaeoglobus fulgidus (strain ATCC 49558 / DSM 4304 / JCM 9628 / NBRC 100126 / VC-16).